A 139-amino-acid polypeptide reads, in one-letter code: Large ribosomal subunit protein bL20 (139 aa).

It belongs to the bacterial ribosomal protein bL20 family.

Functionally, binds directly to 23S ribosomal RNA and is necessary for the in vitro assembly process of the 50S ribosomal subunit. It is not involved in the protein synthesizing functions of that subunit. This Leuconostoc mesenteroides subsp. mesenteroides (strain ATCC 8293 / DSM 20343 / BCRC 11652 / CCM 1803 / JCM 6124 / NCDO 523 / NBRC 100496 / NCIMB 8023 / NCTC 12954 / NRRL B-1118 / 37Y) protein is Large ribosomal subunit protein bL20.